The sequence spans 782 residues: Cysteine-rich protein 2-binding protein (782 aa).

S4 is subject to Phosphoserine. Residues 13-33 (RHDDEATRTSTSEGLEEGEVE) are disordered. K231 carries the N6-acetyllysine modification. A disordered region spans residues 251–282 (PVESAMELKEKRSRTQEAKDIRRAQKEAAGFL). Over residues 256 to 276 (MELKEKRSRTQEAKDIRRAQK) the composition is skewed to basic and acidic residues. Phosphoserine is present on S285. K292 is subject to N6-acetyllysine. Residues 315–335 (LSSSDRTPLTSPSPSPSLDFS) are compositionally biased toward low complexity. 2 disordered regions span residues 315–346 (LSSSDRTPLTSPSPSPSLDFSAPGTPASHSAT) and 400–460 (VRKK…EPRY). Basic and acidic residues-rich tracts occupy residues 405–426 (RGPEQIKQEVESEEEKPDRMDI) and 446–459 (KPQLEKDTKPKEPR). S416 carries the post-translational modification Phosphoserine. Residues 638–782 (LDYCYVRPNH…KHAFFLRLRR (145 aa)) form the N-acetyltransferase domain.

Interacts with the LIM 1 domain of CSRP2. Component of the ADA2A-containing complex (ATAC), composed of CSRP2BP, KAT2A, TADA2L, TADA3L, ZZ3, MBIP, WDR5, YEATS2, CCDC101 and DR1. In the complex, it probably interacts directly with KAT2A, MBIP and WDR5. In terms of tissue distribution, expressed in skeletal muscle, heart, lung, placenta, brain, liver, pancreas and kidney. High expression in skeletal muscle and heart. Lower expression in lung.

It is found in the nucleus. It localises to the cytoplasm. Functionally, component of the ATAC complex, a complex with histone acetyltransferase activity on histones H3 and H4. May function as a scaffold for the ATAC complex to promote ATAC complex stability. Has also weak histone acetyltransferase activity toward histone H4. Required for the normal progression through G1 and G2/M phases of the cell cycle. This chain is Cysteine-rich protein 2-binding protein, found in Homo sapiens (Human).